Reading from the N-terminus, the 503-residue chain is Envelope glycoprotein p57 (503 aa).

The first 22 residues, 1–22 (MQLSMSFLIGFGTLVLALSART), serve as a signal peptide directing secretion. Residues 23 to 467 (FDLQGLSCNT…FLNPLGWLRD (445 aa)) are Extracellular-facing. N-linked (GlcNAc...) asparagine; by host glycans are attached at residues Asn-63, Asn-109, Asn-139, Asn-192, Asn-196, Asn-202, Asn-221, Asn-230, and Asn-235. Residues 274–315 (ILQSLLLGVFGTGIASASQFLRGWLNHPDIIGYIVNGVGVVW) form a fusion peptide region. 4 N-linked (GlcNAc...) asparagine; by host glycosylation sites follow: Asn-321, Asn-328, Asn-388, and Asn-438. Residues 468 to 488 (LLAWAAWLGGVLYLISLCVSL) traverse the membrane as a helical segment. Topologically, residues 489–503 (PASFARRRRLGRWQE) are cytoplasmic.

In terms of processing, glycosated; Stabilizes it. Post-translationally, a portion of p57 is cleaved into p27 and p29. p27 and p29 are called gp43 when glycosylated, as they seem to have the same molecular weight.

It localises to the host endoplasmic reticulum membrane. The protein resides in the virion. It is found in the host cell membrane. Functionally, unprocessed envelope protein p57 is thought to be involved in attachment of the virus to its cell surface receptor. This attachment induces virion internalization predominantly through clathrin-dependent endocytosis. In terms of biological role, envelope protein p27 and p29 presumably linked by disulfide bond are the viral type II fusion protein, involved in pH-dependent fusion within early endosomes after internalization of the virion by endocytosis. The protein is Envelope glycoprotein p57 (G) of Borna disease virus 1 (BoDV-1).